Consider the following 483-residue polypeptide: NADH-quinone oxidoreductase subunit N (483 aa).

14 helical membrane passes run 8–28 (INLALMLPEIVISVVAMGLLL), 45–65 (IAAGALMVAMVITLLGVGATQ), 78–98 (FAAFMKVMLYLSTLLPMVVSW), 106–126 (LGNGEYFVLTLFAMLGGMFMI), 131–151 (FLVLYLGIELLSLAIYVLAAY), 166–186 (FVLGSMASGILLYGISLIYGV), 206–226 (MLGITMGLILVVSGLSFKIAA), 241–261 (PTSVTAFMAAMPKIAAFAALF), 275–295 (WGPIMALLAVVSMGVGALAGL), 303–323 (LLAYSSIGHVGYALIGLAVGN), 330–350 (VLVYLTIYIFMNVGAFGLILV), 373–393 (LALLMAIFMFSMAGIPPLAGF), 399–419 (IFMAAIDAHMYTVAILGVLFS), and 452–472 (AIVGVSGILVVLWGILPGSLM).

The protein belongs to the complex I subunit 2 family. As to quaternary structure, NDH-1 is composed of 14 different subunits. Subunits NuoA, H, J, K, L, M, N constitute the membrane sector of the complex.

It is found in the cell inner membrane. The enzyme catalyses a quinone + NADH + 5 H(+)(in) = a quinol + NAD(+) + 4 H(+)(out). NDH-1 shuttles electrons from NADH, via FMN and iron-sulfur (Fe-S) centers, to quinones in the respiratory chain. The immediate electron acceptor for the enzyme in this species is believed to be ubiquinone. Couples the redox reaction to proton translocation (for every two electrons transferred, four hydrogen ions are translocated across the cytoplasmic membrane), and thus conserves the redox energy in a proton gradient. This Magnetococcus marinus (strain ATCC BAA-1437 / JCM 17883 / MC-1) protein is NADH-quinone oxidoreductase subunit N.